Consider the following 546-residue polypeptide: Thermosome subunit beta (546 aa).

This sequence belongs to the TCP-1 chaperonin family. As to quaternary structure, forms a Heterooligomeric complex of two stacked eight-membered rings.

Molecular chaperone; binds unfolded polypeptides in vitro, and has a weak ATPase activity. The sequence is that of Thermosome subunit beta (thsB) from Thermococcus kodakarensis (strain ATCC BAA-918 / JCM 12380 / KOD1) (Pyrococcus kodakaraensis (strain KOD1)).